The chain runs to 357 residues: tRNA-specific 2-thiouridylase MnmA (357 aa).

ATP is bound by residues 6–13 (AMSGGVDS) and leucine 32. The Nucleophile role is filled by cysteine 101. Cysteine 101 and cysteine 193 are oxidised to a cystine. Glycine 125 serves as a coordination point for ATP. An interaction with tRNA region spans residues 143 to 145 (KDQ). The Cysteine persulfide intermediate role is filled by cysteine 193.

The protein belongs to the MnmA/TRMU family.

Its subcellular location is the cytoplasm. The catalysed reaction is S-sulfanyl-L-cysteinyl-[protein] + uridine(34) in tRNA + AH2 + ATP = 2-thiouridine(34) in tRNA + L-cysteinyl-[protein] + A + AMP + diphosphate + H(+). Its function is as follows. Catalyzes the 2-thiolation of uridine at the wobble position (U34) of tRNA, leading to the formation of s(2)U34. The chain is tRNA-specific 2-thiouridylase MnmA from Mycolicibacterium vanbaalenii (strain DSM 7251 / JCM 13017 / BCRC 16820 / KCTC 9966 / NRRL B-24157 / PYR-1) (Mycobacterium vanbaalenii).